A 261-amino-acid polypeptide reads, in one-letter code: Indole-3-glycerol phosphate synthase (261 aa).

Belongs to the TrpC family.

It catalyses the reaction 1-(2-carboxyphenylamino)-1-deoxy-D-ribulose 5-phosphate + H(+) = (1S,2R)-1-C-(indol-3-yl)glycerol 3-phosphate + CO2 + H2O. Its pathway is amino-acid biosynthesis; L-tryptophan biosynthesis; L-tryptophan from chorismate: step 4/5. In Burkholderia pseudomallei (strain 1710b), this protein is Indole-3-glycerol phosphate synthase.